A 422-amino-acid chain; its full sequence is Cytochrome P450-pinF1, plant-inducible (422 aa).

Heme is bound at residue C369.

This sequence belongs to the cytochrome P450 family. It depends on heme as a cofactor.

Not essential for virulence, but may be involved in the detoxification of plant protective agents at the site of wounding. This Rhizobium radiobacter (Agrobacterium tumefaciens) protein is Cytochrome P450-pinF1, plant-inducible (cyp103).